The sequence spans 130 residues: S-adenosylmethionine decarboxylase proenzyme (130 aa).

The Schiff-base intermediate with substrate; via pyruvic acid role is filled by Ser66. Pyruvic acid (Ser); by autocatalysis is present on Ser66. The active-site Proton acceptor; for processing activity is the His71. Cys86 acts as the Proton donor; for catalytic activity in catalysis.

It belongs to the prokaryotic AdoMetDC family. Type 1 subfamily. In terms of assembly, heterotetramer of two alpha and two beta chains arranged as a dimer of alpha/beta heterodimers. The cofactor is pyruvate. Is synthesized initially as an inactive proenzyme. Formation of the active enzyme involves a self-maturation process in which the active site pyruvoyl group is generated from an internal serine residue via an autocatalytic post-translational modification. Two non-identical subunits are generated from the proenzyme in this reaction, and the pyruvate is formed at the N-terminus of the alpha chain, which is derived from the carboxyl end of the proenzyme. The post-translation cleavage follows an unusual pathway, termed non-hydrolytic serinolysis, in which the side chain hydroxyl group of the serine supplies its oxygen atom to form the C-terminus of the beta chain, while the remainder of the serine residue undergoes an oxidative deamination to produce ammonia and the pyruvoyl group blocking the N-terminus of the alpha chain.

The enzyme catalyses S-adenosyl-L-methionine + H(+) = S-adenosyl 3-(methylsulfanyl)propylamine + CO2. It functions in the pathway amine and polyamine biosynthesis; S-adenosylmethioninamine biosynthesis; S-adenosylmethioninamine from S-adenosyl-L-methionine: step 1/1. Its function is as follows. Catalyzes the decarboxylation of S-adenosylmethionine to S-adenosylmethioninamine (dcAdoMet), the propylamine donor required for the synthesis of the polyamines spermine and spermidine from the diamine putrescine. The sequence is that of S-adenosylmethionine decarboxylase proenzyme from Bacillus cereus (strain ATCC 10987 / NRS 248).